We begin with the raw amino-acid sequence, 135 residues long: Large ribosomal subunit protein mL54 (135 aa).

The protein belongs to the mitochondrion-specific ribosomal protein mL54 family. As to quaternary structure, component of the mitochondrial ribosome large subunit (39S) which comprises a 16S rRNA and about 50 distinct proteins.

The protein resides in the mitochondrion. This Danio rerio (Zebrafish) protein is Large ribosomal subunit protein mL54 (mrpl54).